The following is a 117-amino-acid chain: Transcription elongation factor SPT4 (117 aa).

Ala2 carries the N-acetylalanine modification. The tract at residues 2 to 40 is interaction with SUPT5H; it reads ALETVPKDLRHLRACLLCSLVKTIDQFEYDGCDNCDAYL. Residues Cys16, Cys19, Cys33, and Cys36 each contribute to the Zn(2+) site. The C4-type zinc-finger motif lies at 16–36; sequence CLLCSLVKTIDQFEYDGCDNC.

This sequence belongs to the SPT4 family. Interacts with SUPT5H to form DSIF. DSIF interacts with the positive transcription elongation factor b complex (P-TEFb complex), which is composed of CDK9 and cyclin-T (CCNT1 or CCNT2). DSIF interacts with RNA polymerase II, and this interaction is reduced by phosphorylation of the C-terminal domain (CTD) of POLR2A by P-TEFb. DSIF also interacts with the NELF complex, which is composed of NELFA, NELFB, NELFD and NELFE, and this interaction occurs following prior binding of DSIF to RNA polymerase II. DSIF also interacts with PRMT1/HRMT1L2, TATSF1, RNGTT/CAP1A, PRMT5/SKB1, SUPT6H, and can interact with PIN1. Post-translationally, ubiquitinated by UBR5 when not assembled in the DSIF complex, leading to its degradation: UBR5 recognizes and binds a degron that is not accessible when SUPT4H1 is part of the DSIF complex.

It is found in the nucleus. Component of the DRB sensitivity-inducing factor complex (DSIF complex), which regulates mRNA processing and transcription elongation by RNA polymerase II. DSIF positively regulates mRNA capping by stimulating the mRNA guanylyltransferase activity of RNGTT/CAP1A. DSIF also acts cooperatively with the negative elongation factor complex (NELF complex) to enhance transcriptional pausing at sites proximal to the promoter. Transcriptional pausing may facilitate the assembly of an elongation competent RNA polymerase II complex. DSIF and NELF promote pausing by inhibition of the transcription elongation factor TFIIS/S-II. TFIIS/S-II binds to RNA polymerase II at transcription pause sites and stimulates the weak intrinsic nuclease activity of the enzyme. Cleavage of blocked transcripts by RNA polymerase II promotes the resumption of transcription from the new 3' terminus and may allow repeated attempts at transcription through natural pause sites. This is Transcription elongation factor SPT4 (SUPT4H1) from Pongo abelii (Sumatran orangutan).